The following is a 513-amino-acid chain: Histidine ammonia-lyase (513 aa).

The 5-imidazolinone (Ala-Gly) cross-link spans Ala-142–Gly-144. Ser-143 bears the 2,3-didehydroalanine (Ser) mark.

This sequence belongs to the PAL/histidase family. Post-translationally, contains an active site 4-methylidene-imidazol-5-one (MIO), which is formed autocatalytically by cyclization and dehydration of residues Ala-Ser-Gly.

Its subcellular location is the cytoplasm. It catalyses the reaction L-histidine = trans-urocanate + NH4(+). It functions in the pathway amino-acid degradation; L-histidine degradation into L-glutamate; N-formimidoyl-L-glutamate from L-histidine: step 1/3. In Roseobacter denitrificans (strain ATCC 33942 / OCh 114) (Erythrobacter sp. (strain OCh 114)), this protein is Histidine ammonia-lyase.